The chain runs to 502 residues: Lysine--tRNA ligase (502 aa).

2 residues coordinate Mg(2+): E412 and E419.

Belongs to the class-II aminoacyl-tRNA synthetase family. As to quaternary structure, homodimer. Mg(2+) is required as a cofactor.

The protein localises to the cytoplasm. It catalyses the reaction tRNA(Lys) + L-lysine + ATP = L-lysyl-tRNA(Lys) + AMP + diphosphate. This Buchnera aphidicola subsp. Cinara cedri (strain Cc) protein is Lysine--tRNA ligase.